A 371-amino-acid chain; its full sequence is Choline kinase B1 (371 aa).

Belongs to the choline/ethanolamine kinase family. Mg(2+) is required as a cofactor.

The catalysed reaction is choline + ATP = phosphocholine + ADP + H(+). This Caenorhabditis elegans protein is Choline kinase B1 (ckb-1).